Here is a 396-residue protein sequence, read N- to C-terminus: 3-amino-4-hydroxybenzoic acid synthase (396 aa).

The segment at 1 to 29 (MSSSPSPSPSSSSSSSASSSASSSPSSSS) is disordered.

It belongs to the archaeal-type DHQ synthase family. GriH subfamily. As to quaternary structure, monomer. Mn(2+) is required as a cofactor.

The enzyme catalyses 2-amino-4,5-dihydroxy-6-oxo-7-(phosphooxy)heptanoate = 3-amino-4-hydroxybenzoate + phosphate + 2 H2O + H(+). In terms of biological role, catalyzes the cyclization of 2-amino-4,5-dihydroxy-6-one-heptanoic acid-7-phosphate to yield 3-amino-4-hydroxybenzoic acid (3,4-AHBA). This chain is 3-amino-4-hydroxybenzoic acid synthase (griH), found in Streptomyces griseus subsp. griseus (strain JCM 4626 / CBS 651.72 / NBRC 13350 / KCC S-0626 / ISP 5235).